The following is a 513-amino-acid chain: Sterol 14-alpha demethylase (513 aa).

The helical transmembrane segment at Phe10–Leu30 threads the bilayer. Residues Asn37 and Asn406 are each glycosylated (N-linked (GlcNAc...) asparagine). Cys453 lines the heme pocket.

The protein belongs to the cytochrome P450 family. The cofactor is heme.

The protein resides in the endoplasmic reticulum membrane. The enzyme catalyses a 14alpha-methyl steroid + 3 reduced [NADPH--hemoprotein reductase] + 3 O2 = a Delta(14) steroid + formate + 3 oxidized [NADPH--hemoprotein reductase] + 4 H2O + 4 H(+). It catalyses the reaction a 14alpha-methyl steroid + reduced [NADPH--hemoprotein reductase] + O2 = a 14alpha-hydroxymethyl steroid + oxidized [NADPH--hemoprotein reductase] + H2O + H(+). It carries out the reaction a 14alpha-hydroxymethyl steroid + reduced [NADPH--hemoprotein reductase] + O2 = a 14alpha-formyl steroid + oxidized [NADPH--hemoprotein reductase] + 2 H2O + H(+). The catalysed reaction is a 14alpha-formyl steroid + reduced [NADPH--hemoprotein reductase] + O2 = a Delta(14) steroid + formate + oxidized [NADPH--hemoprotein reductase] + H2O + 2 H(+). The enzyme catalyses lanosterol + 3 reduced [NADPH--hemoprotein reductase] + 3 O2 = 4,4-dimethyl-5alpha-cholesta-8,14,24-trien-3beta-ol + formate + 3 oxidized [NADPH--hemoprotein reductase] + 4 H2O + 4 H(+). It catalyses the reaction lanosterol + reduced [NADPH--hemoprotein reductase] + O2 = 32-hydroxylanosterol + oxidized [NADPH--hemoprotein reductase] + H2O + H(+). It carries out the reaction 32-hydroxylanosterol + reduced [NADPH--hemoprotein reductase] + O2 = 32-oxolanosterol + oxidized [NADPH--hemoprotein reductase] + 2 H2O + H(+). The catalysed reaction is 32-oxolanosterol + reduced [NADPH--hemoprotein reductase] + O2 = 4,4-dimethyl-5alpha-cholesta-8,14,24-trien-3beta-ol + formate + oxidized [NADPH--hemoprotein reductase] + H2O + 2 H(+). The enzyme catalyses eburicol + 3 reduced [NADPH--hemoprotein reductase] + 3 O2 = 14-demethyleburicol + formate + 3 oxidized [NADPH--hemoprotein reductase] + 4 H2O + 4 H(+). It catalyses the reaction eburicol + reduced [NADPH--hemoprotein reductase] + O2 = 32-hydroxyeburicol + oxidized [NADPH--hemoprotein reductase] + H2O + H(+). It carries out the reaction 32-hydroxyeburicol + reduced [NADPH--hemoprotein reductase] + O2 = 32-oxoeburicol + oxidized [NADPH--hemoprotein reductase] + 2 H2O + H(+). The catalysed reaction is 32-oxoeburicol + reduced [NADPH--hemoprotein reductase] + O2 = 14-demethyleburicol + formate + oxidized [NADPH--hemoprotein reductase] + H2O + 2 H(+). It participates in steroid biosynthesis; sterol biosynthesis. In terms of biological role, sterol 14alpha-demethylase, encoded by cyp51A, cyp51B and cyp51C, that plays a critical role in the third module of ergosterol biosynthesis pathway, being ergosterol the major sterol component in fungal membranes that participates in a variety of functions. The third module or late pathway involves the ergosterol synthesis itself through consecutive reactions that mainly occur in the endoplasmic reticulum (ER) membrane. In filamentous fungi, during the initial step of this module, lanosterol (lanosta-8,24-dien-3beta-ol) can be metabolized to eburicol. Sterol 14alpha-demethylase catalyzes the three-step oxidative removal of the 14alpha-methyl group (C-32) of both these sterols in the form of formate, and converts eburicol and lanosterol to 14-demethyleburicol (4,4,24-trimethylergosta-8,14,24(28)-trienol) and 4,4-dimethyl-5alpha-cholesta-8,14,24-trien-3beta-ol, respectively, which are further metabolized by other enzymes in the pathway to ergosterol. Can also use substrates not intrinsic to fungi, such as 24,25-dihydrolanosterol (DHL), producing 4,4'-dimethyl-8,14-cholestadien-3-beta-ol, but at lower rates than the endogenous substrates. Its function is as follows. As a target of azole drugs, plays a crucial role in azole susceptibility. In Aspergillus flavus (strain ATCC 200026 / FGSC A1120 / IAM 13836 / NRRL 3357 / JCM 12722 / SRRC 167), this protein is Sterol 14-alpha demethylase.